Reading from the N-terminus, the 502-residue chain is Glycerol kinase (502 aa).

Threonine 14 serves as a coordination point for ADP. The ATP site is built by threonine 14, threonine 15, and serine 16. Threonine 14 lines the sn-glycerol 3-phosphate pocket. Residue arginine 18 coordinates ADP. Arginine 84, glutamate 85, tyrosine 137, and aspartate 247 together coordinate sn-glycerol 3-phosphate. 5 residues coordinate glycerol: arginine 84, glutamate 85, tyrosine 137, aspartate 247, and glutamine 248. 2 residues coordinate ADP: threonine 269 and glycine 312. ATP contacts are provided by threonine 269, glycine 312, glutamine 316, and glycine 413. Glycine 413 and asparagine 417 together coordinate ADP.

The protein belongs to the FGGY kinase family. Homotetramer and homodimer (in equilibrium). Heterodimer with EIIA-Glc. Binds 1 zinc ion per glycerol kinase EIIA-Glc dimer. The zinc ion is important for dimerization.

The enzyme catalyses glycerol + ATP = sn-glycerol 3-phosphate + ADP + H(+). The protein operates within polyol metabolism; glycerol degradation via glycerol kinase pathway; sn-glycerol 3-phosphate from glycerol: step 1/1. With respect to regulation, activity of this regulatory enzyme is affected by several metabolites. Allosterically and non-competitively inhibited by fructose 1,6-bisphosphate (FBP) and unphosphorylated phosphocarrier protein EIIA-Glc (III-Glc), an integral component of the bacterial phosphotransferase (PTS) system. Key enzyme in the regulation of glycerol uptake and metabolism. Catalyzes the phosphorylation of glycerol to yield sn-glycerol 3-phosphate. The polypeptide is Glycerol kinase (Photorhabdus laumondii subsp. laumondii (strain DSM 15139 / CIP 105565 / TT01) (Photorhabdus luminescens subsp. laumondii)).